The chain runs to 235 residues: Hydroxyacylglutathione hydrolase (235 aa).

His53, His55, Asp57, His58, His109, Asp127, and His165 together coordinate Zn(2+).

The protein belongs to the metallo-beta-lactamase superfamily. Glyoxalase II family. In terms of assembly, monomer. Zn(2+) serves as cofactor.

The catalysed reaction is an S-(2-hydroxyacyl)glutathione + H2O = a 2-hydroxy carboxylate + glutathione + H(+). The protein operates within secondary metabolite metabolism; methylglyoxal degradation; (R)-lactate from methylglyoxal: step 2/2. Functionally, thiolesterase that catalyzes the hydrolysis of S-D-lactoyl-glutathione to form glutathione and D-lactic acid. The polypeptide is Hydroxyacylglutathione hydrolase (Actinobacillus pleuropneumoniae serotype 7 (strain AP76)).